We begin with the raw amino-acid sequence, 403 residues long: tRNA(Met) cytidine acetate ligase (403 aa).

ATP is bound by residues 7–20 (IVEY…HLYH), Gly102, Asn168, and Arg193.

Belongs to the TmcAL family.

Its subcellular location is the cytoplasm. It carries out the reaction cytidine(34) in elongator tRNA(Met) + acetate + ATP = N(4)-acetylcytidine(34) in elongator tRNA(Met) + AMP + diphosphate. Its function is as follows. Catalyzes the formation of N(4)-acetylcytidine (ac(4)C) at the wobble position of elongator tRNA(Met), using acetate and ATP as substrates. First activates an acetate ion to form acetyladenylate (Ac-AMP) and then transfers the acetyl group to tRNA to form ac(4)C34. This chain is tRNA(Met) cytidine acetate ligase, found in Clostridium tetani (strain Massachusetts / E88).